Reading from the N-terminus, the 87-residue chain is Small ribosomal subunit protein bS20 (87 aa).

The protein belongs to the bacterial ribosomal protein bS20 family.

Its function is as follows. Binds directly to 16S ribosomal RNA. In Clostridium beijerinckii (strain ATCC 51743 / NCIMB 8052) (Clostridium acetobutylicum), this protein is Small ribosomal subunit protein bS20.